Consider the following 110-residue polypeptide: Large ribosomal subunit protein uL22 (110 aa).

It belongs to the universal ribosomal protein uL22 family. As to quaternary structure, part of the 50S ribosomal subunit.

This protein binds specifically to 23S rRNA; its binding is stimulated by other ribosomal proteins, e.g. L4, L17, and L20. It is important during the early stages of 50S assembly. It makes multiple contacts with different domains of the 23S rRNA in the assembled 50S subunit and ribosome. In terms of biological role, the globular domain of the protein is located near the polypeptide exit tunnel on the outside of the subunit, while an extended beta-hairpin is found that lines the wall of the exit tunnel in the center of the 70S ribosome. This chain is Large ribosomal subunit protein uL22, found in Nitrosococcus oceani (strain ATCC 19707 / BCRC 17464 / JCM 30415 / NCIMB 11848 / C-107).